Consider the following 351-residue polypeptide: Amylovoran biosynthesis glycosyltransferase AmsD (351 aa).

Belongs to the glycosyltransferase group 1 family. Glycosyltransferase 4 subfamily.

The protein operates within glycan metabolism; exopolysaccharide biosynthesis. Its function is as follows. Involved in the biosynthesis of amylovoran which functions as a virulence factor. May be involved in the formation of galactose alpha-1,6 linkages in amylovoran. The polypeptide is Amylovoran biosynthesis glycosyltransferase AmsD (amsD) (Erwinia amylovora (Fire blight bacteria)).